Reading from the N-terminus, the 455-residue chain is tRNA modification GTPase MnmE (455 aa).

The (6S)-5-formyl-5,6,7,8-tetrahydrofolate site is built by R26, E86, and R125. The 155-residue stretch at 222-376 folds into the TrmE-type G domain; that stretch reads GLKTAIIGRP…VEEKINQIFF (155 aa). N232 is a binding site for K(+). GTP contacts are provided by residues 232–237, 251–257, and 276–279; these read NVGKSS, TDIAGTT, and DTAG. S236 contacts Mg(2+). K(+) is bound by residues T251, I253, and T256. T257 is a Mg(2+) binding site. Residue K455 coordinates (6S)-5-formyl-5,6,7,8-tetrahydrofolate.

This sequence belongs to the TRAFAC class TrmE-Era-EngA-EngB-Septin-like GTPase superfamily. TrmE GTPase family. Homodimer. Heterotetramer of two MnmE and two MnmG subunits. The cofactor is K(+).

The protein resides in the cytoplasm. Its function is as follows. Exhibits a very high intrinsic GTPase hydrolysis rate. Involved in the addition of a carboxymethylaminomethyl (cmnm) group at the wobble position (U34) of certain tRNAs, forming tRNA-cmnm(5)s(2)U34. This chain is tRNA modification GTPase MnmE, found in Lactococcus lactis subsp. cremoris (strain MG1363).